The chain runs to 122 residues: Mating-type protein A1 (122 aa).

Positions 62–121 (NHKRGCNIDKKTKDMLNKVYEQKQYLTKEEREFVAKKCNLTPLQVRVWFANKRIRNKNTK) form a DNA-binding region, homeobox.

It belongs to the MATA1 family. As to quaternary structure, forms a heterodimer with ALPHA2.

Its subcellular location is the nucleus. Mating type proteins are sequence specific DNA-binding proteins that act as master switches in yeast differentiation by controlling gene expression in a cell type-specific fashion. Transcriptional corepressor that acts in conjunction with ALPHA2 to repress transcription of haploid-specific genes and of MATALPHA1. This Nakaseomyces delphensis (Yeast) protein is Mating-type protein A1 (MATA1).